The following is a 560-amino-acid chain: Alpha-keto-acid decarboxylase (560 aa).

A thiamine diphosphate-binding site is contributed by glutamate 61. Positions 396–478 (TSFYGMADHR…VVVNNDGYTV (83 aa)) are thiamine pyrophosphate binding. Aspartate 446, asparagine 473, and glycine 475 together coordinate Mg(2+).

This sequence belongs to the TPP enzyme family. The cofactor is a metal cation. Thiamine diphosphate serves as cofactor.

Functionally, decarboxylates branched-chain and aromatic alpha-keto acids to aldehydes. In Mycobacterium tuberculosis (strain CDC 1551 / Oshkosh), this protein is Alpha-keto-acid decarboxylase (kdc).